Consider the following 298-residue polypeptide: Tyrosine recombinase XerC (298 aa).

Positions 1–84 (MNHIQEAFLN…TLRTFYEYWM (84 aa)) constitute a Core-binding (CB) domain. The Tyr recombinase domain maps to 105 to 286 (YLPQFFYEEE…SNQQLRKVYL (182 aa)). Residues Arg-145, Lys-169, His-238, Arg-241, and His-264 contribute to the active site. Tyr-273 serves as the catalytic O-(3'-phospho-DNA)-tyrosine intermediate.

It belongs to the 'phage' integrase family. XerC subfamily. In terms of assembly, forms a cyclic heterotetrameric complex composed of two molecules of XerC and two molecules of XerD.

The protein resides in the cytoplasm. Functionally, site-specific tyrosine recombinase, which acts by catalyzing the cutting and rejoining of the recombining DNA molecules. The XerC-XerD complex is essential to convert dimers of the bacterial chromosome into monomers to permit their segregation at cell division. It also contributes to the segregational stability of plasmids. This is Tyrosine recombinase XerC from Staphylococcus aureus (strain MSSA476).